The sequence spans 576 residues: Sulfite reductase [NADPH] hemoprotein beta-component (576 aa).

4 residues coordinate [4Fe-4S] cluster: cysteine 435, cysteine 441, cysteine 480, and cysteine 484. Siroheme is bound at residue cysteine 484.

This sequence belongs to the nitrite and sulfite reductase 4Fe-4S domain family. As to quaternary structure, alpha(8)-beta(8). The alpha component is a flavoprotein, the beta component is a hemoprotein. Siroheme serves as cofactor. The cofactor is [4Fe-4S] cluster.

It catalyses the reaction hydrogen sulfide + 3 NADP(+) + 3 H2O = sulfite + 3 NADPH + 4 H(+). The protein operates within sulfur metabolism; hydrogen sulfide biosynthesis; hydrogen sulfide from sulfite (NADPH route): step 1/1. In terms of biological role, component of the sulfite reductase complex that catalyzes the 6-electron reduction of sulfite to sulfide. This is one of several activities required for the biosynthesis of L-cysteine from sulfate. This Yersinia pseudotuberculosis serotype IB (strain PB1/+) protein is Sulfite reductase [NADPH] hemoprotein beta-component.